The primary structure comprises 485 residues: ETS translocation variant 4 (485 aa).

Lys6 participates in a covalent cross-link: Glycyl lysine isopeptide (Lys-Gly) (interchain with G-Cter in SUMO2). 2 disordered regions span residues 79-114 (PDFH…RKPP) and 135-214 (IAIK…QHQL). Residue Lys95 forms a Glycyl lysine isopeptide (Lys-Gly) (interchain with G-Cter in SUMO) linkage. Residue Ser100 is modified to Phosphoserine. Residue Lys138 forms a Glycyl lysine isopeptide (Lys-Gly) (interchain with G-Cter in SUMO2) linkage. A phosphoserine mark is found at Ser139 and Ser148. The segment covering 158–171 (QQQSLLRASSSSQS) has biased composition (low complexity). Ser215 carries the phosphoserine modification. Residues Lys227 and Lys261 each participate in a glycyl lysine isopeptide (Lys-Gly) (interchain with G-Cter in SUMO) cross-link. Lys323 is covalently cross-linked (Glycyl lysine isopeptide (Lys-Gly) (interchain with G-Cter in SUMO2)). A DNA-binding region (ETS) is located at residues 342-422 (LQLWQFLVAL…AGERYVYKFV (81 aa)).

It belongs to the ETS family. Post-translationally, sumoylated; enhanced upon ERK/MAP kinase pathway activation it positively regulates the transcriptional activator capacity. Sumoylation at Lys-95 probably requires phosphorylation at Ser-100. Transiently polysumoylated and desumoylated by SENP1. Sumoylation is a prerequisite to polyubiquitination which in turn increases proteasomal-mediated degradation. Probably polyubiquitinated by RNF4 and deubiquitinated by USP2. In terms of tissue distribution, epididymis and brain.

Its subcellular location is the nucleus. Functionally, transcriptional activator. May play a role in keratinocyte differentiation. In Mus musculus (Mouse), this protein is ETS translocation variant 4 (Etv4).